Consider the following 279-residue polypeptide: Dehydrogenase/reductase SDR family member 4 (279 aa).

NADP(+) is bound at residue 37-61 (LVTASTDGIGFAIARRLAEDGAHVV). Lys-93 bears the N6-acetyllysine; alternate mark. Lys-93 carries the N6-succinyllysine; alternate modification. At Lys-106 the chain carries N6-acetyllysine. Ser-170 contacts substrate. Residue Tyr-183 is the Proton acceptor of the active site. Lys-187 serves as a coordination point for NADP(+). At Lys-217 the chain carries N6-acetyllysine; alternate. Position 217 is an N6-succinyllysine; alternate (Lys-217). The residue at position 221 (Ser-221) is a Phosphoserine. N6-succinyllysine is present on residues Lys-228 and Lys-235. Residues 277–279 (SRL) carry the Peroxisomal targeting signal motif.

Belongs to the short-chain dehydrogenases/reductases (SDR) family. In terms of assembly, homotetramer.

It is found in the peroxisome. The enzyme catalyses a secondary alcohol + NADP(+) = a ketone + NADPH + H(+). The catalysed reaction is 3alpha-hydroxy-5beta-pregnan-20-one + NADP(+) = 5beta-pregnan-3,20-dione + NADPH + H(+). It carries out the reaction 5beta-dihydrotestosterone + NADPH + H(+) = 5beta-androstane-3alpha,17beta-diol + NADP(+). It catalyses the reaction all-trans-retinol + NADP(+) = all-trans-retinal + NADPH + H(+). The enzyme catalyses isatin + NADPH + H(+) = 3-hydroxyindolin-2-one + NADP(+). NADPH-dependent oxidoreductase which catalyzes the reduction of a variety of compounds bearing carbonyl groups including ketosteroids, alpha-dicarbonyl compounds, aldehydes, aromatic ketones and quinones. Reduces all-trans-retinal and 9-cis retinal. Reduces 3-ketosteroids and benzil into 3alpha-hydroxysteroids and S-benzoin, respectively, in contrast to the stereoselectivity of primates DHRS4s which produce 3beta-hydroxysteroids and R-benzoin. In the reverse reaction, catalyzes the NADP-dependent oxidation of 3alpha-hydroxysteroids and alcohol, but with much lower efficiency. Involved in the metabolism of 3alpha-hydroxysteroids, retinoid, isatin and xenobiotic carbonyl compounds. This Mus musculus (Mouse) protein is Dehydrogenase/reductase SDR family member 4.